A 361-amino-acid chain; its full sequence is Chorismate synthase (361 aa).

Residues R48 and R54 each coordinate NADP(+). FMN is bound by residues 125–127, 238–239, G278, 293–297, and R319; these read RSS, NA, and KPTSS.

The protein belongs to the chorismate synthase family. In terms of assembly, homotetramer. FMNH2 is required as a cofactor.

The catalysed reaction is 5-O-(1-carboxyvinyl)-3-phosphoshikimate = chorismate + phosphate. It participates in metabolic intermediate biosynthesis; chorismate biosynthesis; chorismate from D-erythrose 4-phosphate and phosphoenolpyruvate: step 7/7. Catalyzes the anti-1,4-elimination of the C-3 phosphate and the C-6 proR hydrogen from 5-enolpyruvylshikimate-3-phosphate (EPSP) to yield chorismate, which is the branch point compound that serves as the starting substrate for the three terminal pathways of aromatic amino acid biosynthesis. This reaction introduces a second double bond into the aromatic ring system. The sequence is that of Chorismate synthase from Photorhabdus laumondii subsp. laumondii (strain DSM 15139 / CIP 105565 / TT01) (Photorhabdus luminescens subsp. laumondii).